The chain runs to 215 residues: UPF0502 protein Ping_1905 (215 aa).

The protein belongs to the UPF0502 family.

The polypeptide is UPF0502 protein Ping_1905 (Psychromonas ingrahamii (strain DSM 17664 / CCUG 51855 / 37)).